Consider the following 668-residue polypeptide: DNA ligase (668 aa).

Residues 37-41 (DNVYD), 86-87 (SM), and glutamate 116 contribute to the NAD(+) site. Residue lysine 118 is the N6-AMP-lysine intermediate of the active site. NAD(+)-binding residues include arginine 139, glutamate 173, lysine 288, and lysine 312. Cysteine 406, cysteine 409, cysteine 424, and cysteine 429 together coordinate Zn(2+). Positions 591–668 (IPDNPFKDKT…TEEEAIAQIK (78 aa)) constitute a BRCT domain.

This sequence belongs to the NAD-dependent DNA ligase family. LigA subfamily. Mg(2+) is required as a cofactor. The cofactor is Mn(2+).

It carries out the reaction NAD(+) + (deoxyribonucleotide)n-3'-hydroxyl + 5'-phospho-(deoxyribonucleotide)m = (deoxyribonucleotide)n+m + AMP + beta-nicotinamide D-nucleotide.. Its function is as follows. DNA ligase that catalyzes the formation of phosphodiester linkages between 5'-phosphoryl and 3'-hydroxyl groups in double-stranded DNA using NAD as a coenzyme and as the energy source for the reaction. It is essential for DNA replication and repair of damaged DNA. The sequence is that of DNA ligase from Lactobacillus acidophilus (strain ATCC 700396 / NCK56 / N2 / NCFM).